The following is a 935-amino-acid chain: Protein HIRA (935 aa).

WD repeat units follow at residues 14–58 (HDTG…DKKK), 72–111 (ESQS…NSMG), 131–170 (GHSM…DRIT), 174–213 (DIQL…CVKS), 222–261 (IEET…QTWK), 277–320 (RAMP…KPLF), and 325–362 (IFNH…IGEM). The interval 431 to 556 (SSDIQLTKSM…RNKKRKVPAT (126 aa)) is disordered. Residues 439-468 (SMEDNSKENESKNSEKTMMEERNKQIDVRK) show a composition bias toward basic and acidic residues. The span at 480–492 (GTTTADPMTSLSS) shows a compositional bias: polar residues. Positions 520-542 (DLEDSSDSDDDDEEEEEDMEISD) are enriched in acidic residues.

It belongs to the WD repeat HIR1 family.

It is found in the nucleus. Required for replication-independent chromatin assembly and for the periodic repression of histone gene transcription during the cell cycle. This is Protein HIRA from Caenorhabditis elegans.